The sequence spans 241 residues: 7-cyano-7-deazaguanine synthase (241 aa).

15 to 25 (FSGGQDSTTTL) contributes to the ATP binding site. 4 residues coordinate Zn(2+): Cys-203, Cys-218, Cys-221, and Cys-224.

The protein belongs to the QueC family. The cofactor is Zn(2+).

It carries out the reaction 7-carboxy-7-deazaguanine + NH4(+) + ATP = 7-cyano-7-deazaguanine + ADP + phosphate + H2O + H(+). Its pathway is purine metabolism; 7-cyano-7-deazaguanine biosynthesis. Functionally, catalyzes the ATP-dependent conversion of 7-carboxy-7-deazaguanine (CDG) to 7-cyano-7-deazaguanine (preQ(0)). This is 7-cyano-7-deazaguanine synthase from Azorhizobium caulinodans (strain ATCC 43989 / DSM 5975 / JCM 20966 / LMG 6465 / NBRC 14845 / NCIMB 13405 / ORS 571).